Consider the following 293-residue polypeptide: Porphobilinogen deaminase (293 aa).

C235 carries the S-(dipyrrolylmethanemethyl)cysteine modification.

It belongs to the HMBS family. Monomer. It depends on dipyrromethane as a cofactor.

It catalyses the reaction 4 porphobilinogen + H2O = hydroxymethylbilane + 4 NH4(+). Its pathway is porphyrin-containing compound metabolism; protoporphyrin-IX biosynthesis; coproporphyrinogen-III from 5-aminolevulinate: step 2/4. Tetrapolymerization of the monopyrrole PBG into the hydroxymethylbilane pre-uroporphyrinogen in several discrete steps. In Ruminiclostridium cellulolyticum (strain ATCC 35319 / DSM 5812 / JCM 6584 / H10) (Clostridium cellulolyticum), this protein is Porphobilinogen deaminase.